Reading from the N-terminus, the 210-residue chain is Large ribosomal subunit protein uL3 (210 aa).

The tract at residues 125–154 (RHGFRGGPKTHGQSDRHRAPGSIGAGTTPG) is disordered.

It belongs to the universal ribosomal protein uL3 family. In terms of assembly, part of the 50S ribosomal subunit. Forms a cluster with proteins L14 and L19.

One of the primary rRNA binding proteins, it binds directly near the 3'-end of the 23S rRNA, where it nucleates assembly of the 50S subunit. The chain is Large ribosomal subunit protein uL3 from Chloroflexus aggregans (strain MD-66 / DSM 9485).